The chain runs to 69 residues: Putative membrane protein insertion efficiency factor (69 aa).

The protein belongs to the UPF0161 family.

The protein localises to the cell membrane. Its function is as follows. Could be involved in insertion of integral membrane proteins into the membrane. This is Putative membrane protein insertion efficiency factor from Clostridium beijerinckii (strain ATCC 51743 / NCIMB 8052) (Clostridium acetobutylicum).